The sequence spans 189 residues: Peptidyl-tRNA hydrolase (189 aa).

Tyrosine 14 contacts tRNA. The Proton acceptor role is filled by histidine 19. 3 residues coordinate tRNA: tyrosine 64, asparagine 66, and asparagine 112.

The protein belongs to the PTH family. In terms of assembly, monomer.

It is found in the cytoplasm. The enzyme catalyses an N-acyl-L-alpha-aminoacyl-tRNA + H2O = an N-acyl-L-amino acid + a tRNA + H(+). In terms of biological role, hydrolyzes ribosome-free peptidyl-tRNAs (with 1 or more amino acids incorporated), which drop off the ribosome during protein synthesis, or as a result of ribosome stalling. Functionally, catalyzes the release of premature peptidyl moieties from peptidyl-tRNA molecules trapped in stalled 50S ribosomal subunits, and thus maintains levels of free tRNAs and 50S ribosomes. The protein is Peptidyl-tRNA hydrolase of Brevibacillus brevis (strain 47 / JCM 6285 / NBRC 100599).